Reading from the N-terminus, the 1010-residue chain is PHD finger protein 20 (1010 aa).

Tudor domains lie at 4–69 and 83–147; these read HPPN…RPLE and GSSE…GNAR. 2 disordered regions span residues 142–373 and 483–609; these read IVGN…EGQL and EKSP…GKLK. The span at 147 to 246 shows a compositional bias: basic and acidic residues; that stretch reads RPKETDHKSL…VEKKPEKDLV (100 aa). The residue at position 159 (Ser159) is a Phosphoserine. Positions 257–269 form a DNA-binding region, a.T hook; it reads KRKRGRPPSITPT. Residues 267–280 show a composition bias toward polar residues; that stretch reads TPTAVDSNSQTLQP. Composition is skewed to basic and acidic residues over residues 292-325, 483-493, and 525-541; these read KRSD…DLSR, EKSPEPEEGPG, and AKEK…ELVR. The C2H2-type zinc finger occupies 455–485; the sequence is FRCKVLDCLKFFRKAKLLHYHMKYFHGMEKS. The segment covering 542–554 has biased composition (basic residues); sequence VKPKKKKKKKKKT. The segment at 657 to 703 adopts a PHD-type zinc-finger fold; that stretch reads RCICEVQEENDFMIQCEECQCWQHGVCMGLLEENVPEKYTCYVCQDP. The disordered stretch occupies residues 804-827; the sequence is RSEESPSYRTLNGAVEKPSPLPRS. Lys841 carries the post-translational modification N6-acetyllysine. A phosphoserine mark is found at Ser876 and Ser878. The segment at 877–902 is disordered; sequence LSPRLGWPIDQDRSRGDIDPKPSSPK. The span at 886-902 shows a compositional bias: basic and acidic residues; it reads DQDRSRGDIDPKPSSPK.

Homodimer; disulfide-linked. Component of some MLL1/MLL complex, at least composed of the core components KMT2A/MLL1, ASH2L, HCFC1, WDR5 and RBBP5, as well as the facultative components BACC1, CHD8, E2F6, HSP70, INO80C, KANSL1, LAS1L, MAX, MCRS1, MGA, MYST1/MOF, PELP1, PHF20, PRP31, RING2, RUVB1/TIP49A, RUVB2/TIP49B, SENP3, TAF1, TAF4, TAF6, TAF7, TAF9 and TEX10. Component of the NSL complex at least composed of MOF/KAT8, KANSL1, KANSL2, KANSL3, MCRS1, PHF20, OGT1/OGT, WDR5 and HCFC1. Post-translationally, ubiquitinated by TRIM26; leading to proteasomal degradation.

It localises to the nucleus. Its function is as follows. Contributes to methyllysine-dependent p53/TP53 stabilization and up-regulation after DNA damage. Methyllysine-binding protein, component of the MOF histone acetyltransferase protein complex. Not required for maintaining the global histone H4 'Lys-16' acetylation (H4K16ac) levels or locus specific histone acetylation, but instead works downstream in transcriptional regulation of MOF target genes. As part of the NSL complex it may be involved in acetylation of nucleosomal histone H4 on several lysine residues. The polypeptide is PHD finger protein 20 (Phf20) (Mus musculus (Mouse)).